The primary structure comprises 985 residues: MECCAPVIGEILRLMYESTFSRVANAIKFKSNVKALNESLERLTELKGNMSEDHETLLTKDKPLRLKLMRWQREAEEVISKARLKLEERVSCGMSLRPRMSRKLVKILDEVKMLEKDGIEFVDMLSVESTPERVEHVPGVSVVHQTMASNMLAKIRDGLTSEKAQKIGVWGMGGVGKTTLVRTLNNKLREEGATQPFGLVIFVIVSKEFDPREVQKQIAERLDIDTQMEESEEKLARRIYVGLMKERKFLLILDDVWKPIDLDLLGIPRTEENKGSKVILTSRFLEVCRSMKTDLDVRVDCLLEEDAWELFCKNAGDVVRSDHVRKIAKAVSQECGGLPLAIITVGTAMRGKKNVKLWNHVLSKLSKSVPWIKSIEEKIFQPLKLSYDFLEDKAKFCFLLCALFPEDYSIEVTEVVRYWMAEGFMEELGSQEDSMNEGITTVESLKDYCLLEDGDRRDTVKMHDVVRDFAIWIMSSSQDDSHSLVMSGTGLQDIRQDKLAPSLRRVSLMNNKLESLPDLVEEFCVKTSVLLLQGNFLLKEVPIGFLQAFPTLRILNLSGTRIKSFPSCSLLRLFSLHSLFLRDCFKLVKLPSLETLAKLELLDLCGTHILEFPRGLEELKRFRHLDLSRTLHLESIPARVVSRLSSLETLDMTSSHYRWSVQGETQKGQATVEEIGCLQRLQVLSIRLHSSPFLLNKRNTWIKRLKKFQLVVGSRYILRTRHDKRRLTISHLNVSQVSIGWLLAYTTSLALNHCQGIEAMMKKLVSDNKGFKNLKSLTIENVIINTNSWVEMVSTNTSKQSSDILDLLPNLEELHLRRVDLETFSELQTHLGLKLETLKIIEITMCRKLRTLLDKRNFLTIPNLEEIEISYCDSLQNLHEALLYHQPFVPNLRVLKLRNLPNLVSICNWGEVWECLEQVEVIHCNQLNCLPISSTCGRIKKIKGELSWWERLEWDDPSALTTVQPFFNPVREVPLLIADATTQML.

Positions 24–88 form a coiled coil; it reads ANAIKFKSNV…ISKARLKLEE (65 aa). An NB-ARC domain is found at 167–429; sequence IGVWGMGGVG…MAEGFMEELG (263 aa). 171 to 178 contacts ATP; that stretch reads GMGGVGKT. 6 LRR repeats span residues 502–523, 526–547, 551–572, 575–597, 598–620, and 621–643; these read SLRR…VEEF, KTSV…GFLQ, TLRI…SLLR, SLHS…ETLA, KLEL…EELK, and RFRH…VVSR.

Belongs to the disease resistance NB-LRR family.

Its function is as follows. Disease resistance protein. The polypeptide is Disease resistance protein At4g27190 (Arabidopsis thaliana (Mouse-ear cress)).